The following is a 221-amino-acid chain: Histone H1.3 (221 aa).

The segment covering Met-1–Lys-17 has biased composition (low complexity). The tract at residues Met-1–Ser-42 is disordered. Residue Ser-2 is modified to N-acetylserine. Position 2 is a phosphoserine (Ser-2). At Lys-17 the chain carries N6-acetyllysine. Residue Thr-18 is modified to Phosphothreonine. The span at Val-20–Ala-36 shows a compositional bias: basic residues. An N6-(beta-hydroxybutyryl)lysine mark is found at Lys-35 and Lys-53. Residues Ser-37–Lys-110 enclose the H15 domain. The residue at position 55 (Arg-55) is a Citrulline. Lys-65, Lys-86, and Lys-91 each carry N6-(beta-hydroxybutyryl)lysine. Residues Ser-87–Lys-221 form a disordered region. Ser-105 carries the phosphoserine; by PKC modification. At Lys-107 the chain carries N6-(beta-hydroxybutyryl)lysine. Basic residues-rich tracts occupy residues Lys-120 to Lys-141, Lys-150 to Lys-161, Lys-170 to Thr-187, and Lys-194 to Lys-221.

It belongs to the histone H1/H5 family. H1 histones are progressively phosphorylated during the cell cycle, becoming maximally phosphorylated during late G2 phase and M phase, and being dephosphorylated sharply thereafter. Post-translationally, citrullination at Arg-55 (H1R54ci) by PADI4 takes place within the DNA-binding site of H1 and results in its displacement from chromatin and global chromatin decondensation, thereby promoting pluripotency and stem cell maintenance.

The protein resides in the nucleus. The protein localises to the chromosome. In terms of biological role, H1 histones bind to linker DNA between nucleosomes forming the macromolecular structure known as the chromatin fiber. H1 histones are necessary for the condensation of nucleosome chains into higher-order structured fibers. Also acts as a regulator of individual gene transcription through chromatin remodeling, nucleosome spacing and DNA methylation. This is Histone H1.3 from Bos taurus (Bovine).